A 58-amino-acid chain; its full sequence is Large ribosomal subunit protein uL30 (58 aa).

This sequence belongs to the universal ribosomal protein uL30 family. As to quaternary structure, part of the 50S ribosomal subunit.

The protein is Large ribosomal subunit protein uL30 of Pelobacter propionicus (strain DSM 2379 / NBRC 103807 / OttBd1).